Reading from the N-terminus, the 234-residue chain is Small ribosomal subunit protein uS3 (234 aa).

The region spanning 39–107 is the KH type-2 domain; sequence IRKFLKKELY…EVSINIKEVK (69 aa).

The protein belongs to the universal ribosomal protein uS3 family. In terms of assembly, part of the 30S ribosomal subunit. Forms a tight complex with proteins S10 and S14.

Its function is as follows. Binds the lower part of the 30S subunit head. Binds mRNA in the 70S ribosome, positioning it for translation. The protein is Small ribosomal subunit protein uS3 of Helicobacter pylori (strain P12).